The following is a 214-amino-acid chain: Cutinase CUT2 (214 aa).

A signal peptide spans 1-18; the sequence is MQFSLSIATAILAATASA. C40 and C117 are oxidised to a cystine. The Nucleophile role is filled by S128. The cysteines at positions 179 and 186 are disulfide-linked. D183 is an active-site residue. Catalysis depends on H196, which acts as the Proton donor/acceptor.

It belongs to the cutinase family. In terms of processing, the 2 disulfide bonds play a critical role in holding the catalytic residues in juxta-position; reduction of the disulfide bridges results in the complete inactivation of the enzyme.

The protein localises to the secreted. The catalysed reaction is cutin + H2O = cutin monomers.. Functionally, catalyzes the hydrolysis of complex carboxylic polyesters found in the cell wall of plants. Degrades cutin, a macromolecule that forms the structure of the plant cuticle. Required for efficient penetration of the host plant cuticle by the appressorium during the initial stage of fungal infection. This Pyricularia oryzae (strain 70-15 / ATCC MYA-4617 / FGSC 8958) (Rice blast fungus) protein is Cutinase CUT2.